The sequence spans 117 residues: Ribonuclease P protein component (117 aa).

It belongs to the RnpA family. As to quaternary structure, consists of a catalytic RNA component (M1 or rnpB) and a protein subunit.

It catalyses the reaction Endonucleolytic cleavage of RNA, removing 5'-extranucleotides from tRNA precursor.. In terms of biological role, RNaseP catalyzes the removal of the 5'-leader sequence from pre-tRNA to produce the mature 5'-terminus. It can also cleave other RNA substrates such as 4.5S RNA. The protein component plays an auxiliary but essential role in vivo by binding to the 5'-leader sequence and broadening the substrate specificity of the ribozyme. The chain is Ribonuclease P protein component from Thermotoga maritima (strain ATCC 43589 / DSM 3109 / JCM 10099 / NBRC 100826 / MSB8).